Consider the following 188-residue polypeptide: Mitochondrial import receptor subunit TOM20 homolog (188 aa).

Residues 1 to 12 (MSDTILGFNKSN) lie on the Mitochondrial intermembrane side of the membrane. Residues 13 to 31 (VVLAAGIAGAAFLGYCIYF) form a helical membrane-spanning segment. Residues 32-188 (DHKRINAPDY…ELIDDTDDLE (157 aa)) lie on the Cytoplasmic side of the membrane. Disordered stretches follow at residues 42–73 (KDKIRQKRRAQAGAGGMAPRRPAAAGNDAAPD) and 156–188 (DEAENEPPMVQYLGDGPPPAQIQELIDDTDDLE). Residues 58–67 (MAPRRPAAAG) show a composition bias toward low complexity.

This sequence belongs to the Tom20 family. In terms of assembly, forms part of the preprotein translocase complex of the outer mitochondrial membrane (TOM complex).

The protein resides in the mitochondrion outer membrane. Functionally, central component of the receptor complex responsible for the recognition and translocation of cytosolically synthesized mitochondrial preproteins. Together with tomm-22 functions as the transit peptide receptor at the surface of the mitochondrion outer membrane and facilitates the movement of preproteins into the translocation pore. The protein is Mitochondrial import receptor subunit TOM20 homolog of Caenorhabditis elegans.